The chain runs to 364 residues: Phosphoserine aminotransferase (364 aa).

An L-glutamate-binding site is contributed by Arg42. Residues 76–77, Trp102, Thr156, Asp175, and Gln198 each bind pyridoxal 5'-phosphate; that span reads GR. Lys199 carries the post-translational modification N6-(pyridoxal phosphate)lysine. 240 to 241 lines the pyridoxal 5'-phosphate pocket; sequence NT.

This sequence belongs to the class-V pyridoxal-phosphate-dependent aminotransferase family. SerC subfamily. As to quaternary structure, homodimer. It depends on pyridoxal 5'-phosphate as a cofactor.

The protein resides in the cytoplasm. It carries out the reaction O-phospho-L-serine + 2-oxoglutarate = 3-phosphooxypyruvate + L-glutamate. The enzyme catalyses 4-(phosphooxy)-L-threonine + 2-oxoglutarate = (R)-3-hydroxy-2-oxo-4-phosphooxybutanoate + L-glutamate. It functions in the pathway amino-acid biosynthesis; L-serine biosynthesis; L-serine from 3-phospho-D-glycerate: step 2/3. It participates in cofactor biosynthesis; pyridoxine 5'-phosphate biosynthesis; pyridoxine 5'-phosphate from D-erythrose 4-phosphate: step 3/5. In terms of biological role, catalyzes the reversible conversion of 3-phosphohydroxypyruvate to phosphoserine and of 3-hydroxy-2-oxo-4-phosphonooxybutanoate to phosphohydroxythreonine. This is Phosphoserine aminotransferase from Shewanella woodyi (strain ATCC 51908 / MS32).